A 480-amino-acid polypeptide reads, in one-letter code: MSGPTWLPPKQPEPSRLPQGRSLPRGALGPPTAHGATLQPHPRVNFCPLPPEHCYQPPGVPEDRGPTWVGSHGTPQRLQGLPPDRGIIRPGSLDAEIDSLTSMLADLDGGRSHAPRRPDRQAFEAPPPHAYRGGSLKPSGGAVPTPMLPASHYGGPTPASYATASTPAGPAFPVQVKVAQPVRGCGLPRRGASQASGPLPGPHFPLTGRGEVWGAGYRSHREPGPGVPEGPSGVHIPAGGGRGGGHEPQGPLGQPPEEELERLTKKLVHDMSHPPSGEYFGRCGGCGEDVVGDGAGVVALDRVFHIGCFVCSTCRAQLRGQHFYAVERRAYCESCYVATLEKCSTCSEPILDRILRAMGKAYHPGCFTCVVCHRGLDGIPFTVDATSQIHCIEDFHRKFAPRCSVCGGAIMPEPGQEETVRIVALDRSFHIGCYKCEECGLLLSSEGECQGCYPLDGHILCKACSAWRIQELSATVTTDC.

A compositionally biased stretch (pro residues) spans 1–12 (MSGPTWLPPKQP). The interval 1-43 (MSGPTWLPPKQPEPSRLPQGRSLPRGALGPPTAHGATLQPHPR) is disordered. At R25 the chain carries Asymmetric dimethylarginine; alternate. R25 carries the post-translational modification Omega-N-methylarginine; alternate. Residue Y55 is modified to Phosphotyrosine; by SRC. The tract at residues 57 to 84 (PPGVPEDRGPTWVGSHGTPQRLQGLPPD) is disordered. Position 92 is a phosphoserine (S92). The tract at residues 107-134 (LDGGRSHAPRRPDRQAFEAPPPHAYRGG) is disordered. Residues 108-122 (DGGRSHAPRRPDRQA) show a composition bias toward basic and acidic residues. Residues R111, R183, and R190 each carry the omega-N-methylarginine modification. A Phosphoserine modification is found at S193. An omega-N-methylarginine mark is found at R209 and R242. Residues 218–257 (RSHREPGPGVPEGPSGVHIPAGGGRGGGHEPQGPLGQPPE) are disordered. A compositionally biased stretch (gly residues) spans 238–247 (AGGGRGGGHE). LIM zinc-binding domains are found at residues 281-339 (GRCG…YVAT), 341-401 (EKCS…KFAP), and 404-471 (SVCG…RIQE). Residues 473-480 (SATVTTDC) are interaction with MAGI1 and PTPN13.

Belongs to the zyxin/ajuba family. Specifically interacts with the ligand binding domain of the thyroid receptor (TR) in the presence of thyroid hormone. Interacts (via the third LIM domain and C-terminus) with PTPN13 (via the second PDZ domain). Interacts (via the second LIM domain or via the third LIM domain plus C-terminus) with PDLIM4 (via PDZ domain). Found in a complex with PTPN13 and PDLIM4. Interacts with SVIL isoform 2. Interacts with LPAR2 but not other LPA receptors. Interacts with PRKAA2. Interacts with MAGI1. Interacts with SCRIB. In case of infection, interacts with S.typhimurium protein sseI. In terms of processing, phosphorylation at Tyr-55 by SRC is required for enhancement of lysophosphatidic acid-induced cell migration. Tyr-55 is dephosphorylated by PTPN13. As to expression, highly expressed in kidney, stomach, lung, heart and testis. Low expression levels in brain, colon, thymus, pancreas and skin. Not expressed in skeletal muscle.

It localises to the cytoplasm. The protein resides in the cytoskeleton. It is found in the cell junction. Its subcellular location is the focal adhesion. The protein localises to the nucleus. In terms of biological role, relays signals from the cell surface to the nucleus to weaken adherens junction and promote actin cytoskeleton reorganization and cell invasiveness. Involved in lysophosphatidic acid-induced cell adhesion and migration. Acts as a transcriptional coactivator for NF-kappa-B and JUN, and mediates the transrepression of these transcription factors induced by glucocorticoid receptor. This is Thyroid receptor-interacting protein 6 (Trip6) from Mus musculus (Mouse).